We begin with the raw amino-acid sequence, 34 residues long: Potassium channel toxin alpha-KTx 18.2 (34 aa).

Intrachain disulfides connect Cys7–Cys26, Cys12–Cys31, and Cys16–Cys33.

As to expression, expressed by the venom gland.

It is found in the secreted. In terms of biological role, reversibly blocks Shaker B potassium channels. The sequence is that of Potassium channel toxin alpha-KTx 18.2 from Tityus discrepans (Venezuelan scorpion).